The following is a 519-amino-acid chain: Putative cysteine ligase BshC (519 aa).

2 coiled-coil regions span residues 51–71 (LNALVDELMRQNPRLNDSLKE) and 440–464 (TKLNKQLQLAVETIVDQKRRLHEQA).

Belongs to the BshC family.

Involved in bacillithiol (BSH) biosynthesis. May catalyze the last step of the pathway, the addition of cysteine to glucosamine malate (GlcN-Mal) to generate BSH. The chain is Putative cysteine ligase BshC from Exiguobacterium sibiricum (strain DSM 17290 / CCUG 55495 / CIP 109462 / JCM 13490 / 255-15).